Consider the following 421-residue polypeptide: Telomeric repeat-binding factor 1 (421 aa).

Residues 1-30 (MAETVSSAARDAPSREGWTDSDSPEQEEVG) are disordered. Residue Ala-2 is modified to N-acetylalanine. The tract at residues 49–255 (ENAELVAEVE…AATKVVENEK (207 aa)) is TRFH mediates dimerization. Lys-200 participates in a covalent cross-link: Glycyl lysine isopeptide (Lys-Gly) (interchain with G-Cter in SUMO2). A Phosphoserine; by ATM modification is found at Ser-206. An interaction with RLIM region spans residues 252 to 365 (ENEKARTQAS…PDTDDKSGRR (114 aa)). Residues 253 to 266 (NEKARTQASKDRPD) show a composition bias toward basic and acidic residues. Residues 253–366 (NEKARTQASK…DTDDKSGRRK (114 aa)) are disordered. Polar residues predominate over residues 284-310 (VNGQQSTETEPLVDTVSSIRSHKNALS). The Nuclear localization signal motif lies at 313-367 (KHRRAPSDFSRNEARTGTLQCETTMERNRRTSGRNRLCVSENQPDTDDKSGRRKR). An HTH myb-type domain is found at 362–419 (SGRRKRQTWLWEEDRILKCGVKKYGEGNWAKILSHYKFNNRTSVMLKDRWRTMKRLKL). A DNA-binding region (H-T-H motif) is located at residues 390–415 (WAKILSHYKFNNRTSVMLKDRWRTMK).

Homodimer; can contain both isoforms. Found in a complex with POT1; TINF2 and TNKS1. Interacts with ATM, TINF2, TNKS1, TNKS2, PINX1, NEK2 and MAPRE1. Component of the shelterin complex (telosome) composed of TERF1, TERF2, TINF2, TERF2IP ACD and POT1. Interacts with RLIM (via N-terminus). Interacts with FBXO4. Interaction with TINF2 protects against interaction with FBXO4 and subsequent polyubiquitination and proteasomal degradation. Interacts with GNL3L; this interaction promotes homodimerization. Interacts with TIN2. Interactions with GNL3L and TIN2 are mutually exclusive. Interacts with RTEL1. Interacts with CCDC79/TERB1. Post-translationally, phosphorylated preferentially on Ser-219 in an ATM-dependent manner in response to ionizing DNA damage. In terms of processing, ADP-ribosylation by TNKS1 or TNKS2 diminishes its ability to bind to telomeric DNA. Ubiquitinated by RLIM/RNF12, leading to its degradation by the proteasome. Ubiquitinated by a SCF (SKP1-CUL1-F-box protein) ubiquitin-protein ligase complex, leading to its degradation by the proteasome.

It is found in the nucleus. The protein resides in the chromosome. The protein localises to the telomere. Its subcellular location is the cytoplasm. It localises to the cytoskeleton. It is found in the spindle. Functionally, binds the telomeric double-stranded 5'-TTAGGG-3' repeat and negatively regulates telomere length. Involved in the regulation of the mitotic spindle. Component of the shelterin complex (telosome) that is involved in the regulation of telomere length and protection. Shelterin associates with arrays of double-stranded 5'-TTAGGG-3' repeats added by telomerase and protects chromosome ends; without its protective activity, telomeres are no longer hidden from the DNA damage surveillance and chromosome ends are inappropriately processed by DNA repair pathways. In Mus musculus (Mouse), this protein is Telomeric repeat-binding factor 1 (Terf1).